The chain runs to 305 residues: Dihydroorotate dehydrogenase B (NAD(+)), catalytic subunit (305 aa).

FMN contacts are provided by residues Ser23 and 47 to 48 (KG). Substrate-binding positions include Lys47 and 71 to 75 (NAIGL). Positions 101 and 129 each coordinate FMN. Asn129 serves as a coordination point for substrate. Cys132 functions as the Nucleophile in the catalytic mechanism. The FMN site is built by Lys167 and Ile193. 194-195 (NT) is a binding site for substrate. FMN contacts are provided by residues Gly219, 245 to 246 (GG), and 267 to 268 (GT).

This sequence belongs to the dihydroorotate dehydrogenase family. Type 1 subfamily. As to quaternary structure, heterotetramer of 2 PyrK and 2 PyrD type B subunits. FMN serves as cofactor.

The protein resides in the cytoplasm. It carries out the reaction (S)-dihydroorotate + NAD(+) = orotate + NADH + H(+). Its pathway is pyrimidine metabolism; UMP biosynthesis via de novo pathway; orotate from (S)-dihydroorotate (NAD(+) route): step 1/1. Its function is as follows. Catalyzes the conversion of dihydroorotate to orotate with NAD(+) as electron acceptor. This is Dihydroorotate dehydrogenase B (NAD(+)), catalytic subunit (pyrD) from Geobacter sp. (strain M21).